The chain runs to 773 residues: MVGPTRSKLREGSSDRPQSSCTGQARRRWSAATMEPQQERSAPQERTKWSLLQHFLLGGRKLPSGARNYAARRIQSLNAQNYFQLEEVAKLLLLNRFQFLFTLLDHFREKVQALQMHRFSHRTLFGLAIFVGILHWLHLITLFENDHHFSHLSSLEREMTFRTEMGLYYSYFKTIIEAPSFLEGLWMIMNDRLTEYPLVINTVKRFHLYPEVVIAYWYRTIIGIMNLFGIETKTCWNVTRMEPLNEVQSCEGLGDPACFYIGVIFILNGLMMGLFFIYSTYLSGSQLGGLITVACYFFNHGEATRVMWTPPLRESFSYPFLVLQMYILTIILRTSTVHKKHYMALCFSNVAFMLPWQFAQFILFTQIASLFPMYVVGYIEPSKFQKIIYVNMSSVALCFILMFGNSMYLSSYYSSCLLVTWAIMQKKSKIQKLGGTELQFWLIQGCFWWCGTIILKFLTSKICGVSDHIRLSDLIAARILRYTDFDTLIYTCAPEFDFMEQATPLRYIKTLLLPLILVITYLIFKKIVRDIMCVLYTNTYVRKQLLDNAELIFHTLQLLAFTGLAILIMRLKLFLTPHMCIMASLICSQRLFGWLFCRIHFENVVFGILTMMSIQGCANLHNQWSIMGEFTNLPQEELIHWIKHSTRPDAVFAGAMPTMASIKLSTLRPIVNHPHYEDADLRARTKIVYSVYSRKSAVEVRNNLLKLHVNYYVLEEAWCVVRTKPGCSMLEIWDVEDPSNAANPPLCSILLKDSRPYFTTVFQNSMYRVLKIN.

Residues 1 to 45 (MVGPTRSKLREGSSDRPQSSCTGQARRRWSAATMEPQQERSAPQE) are disordered. The Nuclear portion of the chain corresponds to 1 to 122 (MVGPTRSKLR…ALQMHRFSHR (122 aa)). A helical transmembrane segment spans residues 123–143 (TLFGLAIFVGILHWLHLITLF). The Perinuclear space segment spans residues 144-209 (ENDHHFSHLS…INTVKRFHLY (66 aa)). Residues 210-230 (PEVVIAYWYRTIIGIMNLFGI) traverse the membrane as a helical segment. Topologically, residues 231–256 (ETKTCWNVTRMEPLNEVQSCEGLGDP) are nuclear. A helical membrane pass occupies residues 257 to 277 (ACFYIGVIFILNGLMMGLFFI). Residues 278–311 (YSTYLSGSQLGGLITVACYFFNHGEATRVMWTPP) lie on the Perinuclear space side of the membrane. The chain crosses the membrane as a helical span at residues 312–332 (LRESFSYPFLVLQMYILTIIL). Topologically, residues 333 to 358 (RTSTVHKKHYMALCFSNVAFMLPWQF) are nuclear. Residues 359-379 (AQFILFTQIASLFPMYVVGYI) traverse the membrane as a helical segment. The Perinuclear space portion of the chain corresponds to 380–386 (EPSKFQK). A helical transmembrane segment spans residues 387 to 407 (IIYVNMSSVALCFILMFGNSM). The Nuclear portion of the chain corresponds to 408-437 (YLSSYYSSCLLVTWAIMQKKSKIQKLGGTE). The chain crosses the membrane as a helical span at residues 438-458 (LQFWLIQGCFWWCGTIILKFL). Residues 459-507 (TSKICGVSDHIRLSDLIAARILRYTDFDTLIYTCAPEFDFMEQATPLRY) lie on the Perinuclear space side of the membrane. Residues 508–528 (IKTLLLPLILVITYLIFKKIV) form a helical membrane-spanning segment. Over 529–548 (RDIMCVLYTNTYVRKQLLDN) the chain is Nuclear. The helical transmembrane segment at 549–569 (AELIFHTLQLLAFTGLAILIM) threads the bilayer. The Perinuclear space portion of the chain corresponds to 570–590 (RLKLFLTPHMCIMASLICSQR). Residues 591–611 (LFGWLFCRIHFENVVFGILTM) traverse the membrane as a helical segment. The Nuclear segment spans residues 612–773 (MSIQGCANLH…NSMYRVLKIN (162 aa)).

This sequence belongs to the dpy-19 family. In terms of assembly, interacts with FAM209. In terms of tissue distribution, predominantly expressed in testis. Present in testis but absent from epididymal sperm (at protein level).

The protein localises to the nucleus inner membrane. Its function is as follows. Probable C-mannosyltransferase that mediates C-mannosylation of tryptophan residues on target proteins. Functionally, required during spermatogenesis for sperm head elongation and acrosome formation. Also plays a role in acrosome attachment to the nuclear envelope. The sequence is that of Probable C-mannosyltransferase DPY19L2 (Dpy19l2) from Mus musculus (Mouse).